A 428-amino-acid polypeptide reads, in one-letter code: GTPase Obg (428 aa).

Residues 1 to 158 enclose the Obg domain; that stretch reads MFVDQTKIDV…RTLRLELKVL (158 aa). An OBG-type G domain is found at 159 to 328; that stretch reads ADVGLVGFPS…LMGKTADLVE (170 aa). GTP is bound by residues 165–172, 190–194, 212–215, 282–285, and 309–311; these read GFPSVGKS, FTTLT, DLPG, TQMD, and SSV. Ser172 and Thr192 together coordinate Mg(2+). Residues 350–428 form the OCT domain; that stretch reads YKKPEDEGFK…IADFTFEFVD (79 aa).

It belongs to the TRAFAC class OBG-HflX-like GTPase superfamily. OBG GTPase family. Monomer. Mg(2+) is required as a cofactor.

The protein resides in the cytoplasm. In terms of biological role, an essential GTPase which binds GTP, GDP and possibly (p)ppGpp with moderate affinity, with high nucleotide exchange rates and a fairly low GTP hydrolysis rate. Plays a role in control of the cell cycle, stress response, ribosome biogenesis and in those bacteria that undergo differentiation, in morphogenesis control. The chain is GTPase Obg from Lactobacillus johnsonii (strain CNCM I-12250 / La1 / NCC 533).